The primary structure comprises 178 residues: ATP synthase subunit b (178 aa).

Residues 19–39 (ITGIGFVILLFIAIKYIVPAF) traverse the membrane as a helical segment.

Belongs to the ATPase B chain family. As to quaternary structure, F-type ATPases have 2 components, F(1) - the catalytic core - and F(0) - the membrane proton channel. F(1) has five subunits: alpha(3), beta(3), gamma(1), delta(1), epsilon(1). F(0) has three main subunits: a(1), b(2) and c(10-14). The alpha and beta chains form an alternating ring which encloses part of the gamma chain. F(1) is attached to F(0) by a central stalk formed by the gamma and epsilon chains, while a peripheral stalk is formed by the delta and b chains.

It localises to the cell membrane. Functionally, f(1)F(0) ATP synthase produces ATP from ADP in the presence of a proton or sodium gradient. F-type ATPases consist of two structural domains, F(1) containing the extramembraneous catalytic core and F(0) containing the membrane proton channel, linked together by a central stalk and a peripheral stalk. During catalysis, ATP synthesis in the catalytic domain of F(1) is coupled via a rotary mechanism of the central stalk subunits to proton translocation. In terms of biological role, component of the F(0) channel, it forms part of the peripheral stalk, linking F(1) to F(0). The chain is ATP synthase subunit b from Kocuria rhizophila (strain ATCC 9341 / DSM 348 / NBRC 103217 / DC2201).